The following is a 518-amino-acid chain: Mitochondrial distribution and morphology protein 34 (518 aa).

One can recognise an SMP-LTD domain in the interval 1–198; the sequence is MSFKVNWNTL…LPTLIHRLSL (198 aa). 2 disordered regions span residues 335–369 and 491–518; these read SRPKRRVIKLGSKKSSVKSTPSAETLASPIPSEMS and IPDVKSHPGTGRKLDTGFEMPPPPPYQV. Positions 336-350 are enriched in basic residues; that stretch reads RPKRRVIKLGSKKSS. The segment covering 492–506 has biased composition (basic and acidic residues); it reads PDVKSHPGTGRKLDT.

It belongs to the MDM34 family. Component of the ER-mitochondria encounter structure (ERMES) or MDM complex, composed of MMM1, MDM10, MDM12 and MDM34.

Its subcellular location is the mitochondrion outer membrane. Component of the ERMES/MDM complex, which serves as a molecular tether to connect the endoplasmic reticulum (ER) and mitochondria. Components of this complex are involved in the control of mitochondrial shape and protein biogenesis, and function in nonvesicular lipid trafficking between the ER and mitochondria. MDM34 is required for the interaction of the ER-resident membrane protein MMM1 and the outer mitochondrial membrane-resident beta-barrel protein MDM10. The polypeptide is Mitochondrial distribution and morphology protein 34 (Meyerozyma guilliermondii (strain ATCC 6260 / CBS 566 / DSM 6381 / JCM 1539 / NBRC 10279 / NRRL Y-324) (Yeast)).